The following is a 144-amino-acid chain: Large ribosomal subunit protein uL16 (144 aa).

The protein belongs to the universal ribosomal protein uL16 family. As to quaternary structure, part of the 50S ribosomal subunit.

Functionally, binds 23S rRNA and is also seen to make contacts with the A and possibly P site tRNAs. The polypeptide is Large ribosomal subunit protein uL16 (Oceanobacillus iheyensis (strain DSM 14371 / CIP 107618 / JCM 11309 / KCTC 3954 / HTE831)).